The sequence spans 319 residues: Taste receptor type 2 member 39 (319 aa).

Over 1–16 the chain is Extracellular; it reads MAQPSNYWKQDVLPLS. Residues 17–37 form a helical membrane-spanning segment; it reads ILMLTLVATECTIGIIASGIV. The Cytoplasmic portion of the chain corresponds to 38-65; sequence MAVNAVSWVQKKAISITTRILLLLSVSR. The helical transmembrane segment at 66–86 threads the bilayer; the sequence is IGLQSIMLIEITSSIFNVAFY. Topologically, residues 87–97 are extracellular; it reads NSVLYRVSNVS. The N-linked (GlcNAc...) asparagine glycan is linked to Asn-95. The chain crosses the membrane as a helical span at residues 98–118; that stretch reads FVFLNYCSLWFAALLSFFHFV. Over 119-137 the chain is Cytoplasmic; that stretch reads KIANFSYPLFFKLKWRISE. A helical membrane pass occupies residues 138-158; that stretch reads LMPWLLWLSVFISFSSSMFFS. Over 159–194 the chain is Extracellular; it reads KHKFTVNNNNSLSNNICNFTMKLYVVETNVVNVSFL. N-linked (GlcNAc...) asparagine glycans are attached at residues Asn-167, Asn-176, and Asn-190. Residues 195–215 form a helical membrane-spanning segment; that stretch reads FISGILPPLTMFVATATLLIF. Over 216–247 the chain is Cytoplasmic; that stretch reads SLRRHTLNMRNSATGSRNPCIEAHMQAIKETS. Residues 248–268 traverse the membrane as a helical segment; it reads CFLFLYILNAAALLLSTSNIV. Residues 269–273 are Extracellular-facing; it reads DASLF. The chain crosses the membrane as a helical span at residues 274 to 294; sequence WSIVIRIVLPVYPAGHSVLLI. The Cytoplasmic portion of the chain corresponds to 295-319; it reads QNNPGLRRTWKHLQSQIHLYLQNRF.

The protein belongs to the G-protein coupled receptor T2R family.

Its subcellular location is the membrane. Its function is as follows. Putative taste receptor which may play a role in the perception of bitterness. In Mus musculus (Mouse), this protein is Taste receptor type 2 member 39 (Tas2r39).